The primary structure comprises 136 residues: Secreted RxLR effector protein 10 (136 aa).

An N-terminal signal peptide occupies residues 1–22; the sequence is MRVLNFVLTTTVVLLTSSEGIA. A RxLR-dEER motif is present at residues 42 to 56; sequence RSLRATENPGSDESR. Positions 42–78 are disordered; that stretch reads RSLRATENPGSDESRLNEKDTGFDPDGSSSKEDEDIG. Residues 53-63 show a composition bias toward basic and acidic residues; that stretch reads DESRLNEKDTG.

The protein belongs to the RxLR effector family.

The protein localises to the secreted. It localises to the host cytoplasm. Its subcellular location is the host nucleus. Effector that acts as a broad suppressor of cell death to interrupt plant immunity. Inhibits cell death induced by cell death-inducing proteins, including the PAMP elicitor INF1 from P.infestans. The chain is Secreted RxLR effector protein 10 from Plasmopara viticola (Downy mildew of grapevine).